A 277-amino-acid chain; its full sequence is Type II restriction enzyme EcoRI (277 aa).

Residues Asp-91, Glu-111, and Lys-113 contribute to the active site. Residues Asp-91 and Glu-111 each contribute to the Mg(2+) site.

The protein belongs to the EcoRI type II restriction endonuclease family. In terms of assembly, homodimer. Mg(2+) is required as a cofactor.

It carries out the reaction Endonucleolytic cleavage of DNA to give specific double-stranded fragments with terminal 5'-phosphates.. Its function is as follows. A P subtype restriction enzyme that recognizes the double-stranded sequence 5'-GAATTC-3' and cleaves after G-1. This Escherichia coli protein is Type II restriction enzyme EcoRI (ecoRIR).